The chain runs to 201 residues: Large ribosomal subunit protein uL4 (201 aa).

Positions 39 to 72 (KRQGTSAQKSRSEVIGSGKKPWRQKGTGRARAGS) are disordered.

The protein belongs to the universal ribosomal protein uL4 family. As to quaternary structure, part of the 50S ribosomal subunit.

One of the primary rRNA binding proteins, this protein initially binds near the 5'-end of the 23S rRNA. It is important during the early stages of 50S assembly. It makes multiple contacts with different domains of the 23S rRNA in the assembled 50S subunit and ribosome. In terms of biological role, forms part of the polypeptide exit tunnel. This is Large ribosomal subunit protein uL4 from Wigglesworthia glossinidia brevipalpis.